The chain runs to 607 residues: Replication factor C large subunit (607 aa).

55–62 contributes to the ATP binding site; the sequence is GPAGIGKT. The tract at residues 468–607 is disordered; that stretch reads EEEKPQKEGS…PKNQKTLFDF (140 aa). Basic and acidic residues predominate over residues 506–518; that stretch reads TSEKKENSEKKEN. The segment covering 548–558 has biased composition (polar residues); sequence SESVEQKTSSK.

It belongs to the activator 1 small subunits family. RfcL subfamily. Heteromultimer composed of small subunits (RfcS) and large subunits (RfcL).

Functionally, part of the RFC clamp loader complex which loads the PCNA sliding clamp onto DNA. This is Replication factor C large subunit from Methanosarcina acetivorans (strain ATCC 35395 / DSM 2834 / JCM 12185 / C2A).